We begin with the raw amino-acid sequence, 865 residues long: Anaphase-promoting complex subunit 6 (865 aa).

3 TPR repeats span residues 11–42, 46–75, and 88–149; these read IEKQLKEKIENALSIHSYPTAIFFSDKLLNLV, SKEYVKILYILCDALYLDRQFQRSSYLIQK, and EDYQ…LQIL. Residues 153-293 form a disordered region; that stretch reads NDSSENMDDE…NNNNNNNNNF (141 aa). Acidic residues predominate over residues 183–202; that stretch reads NCDDDDDDDDDDDDDDDDEK. Low complexity predominate over residues 249-292; sequence NKNNNKNNNNNNNNNNNNNNNNNNNNNNNNNNNNNNNNNNNNNN. TPR repeat units lie at residues 300 to 331, 336 to 359, 366 to 438, 478 to 506, 515 to 542, 573 to 602, 607 to 635, 642 to 670, and 675 to 709; these read IRSSISCLKGKCYESMDNLKKAKFWYIKALLT, FEAFESLTKNHLLTYQEEISLLEK, DSWI…DIST, DIQTWISEYYFYRHQFQESYSITKRILKQ, CLMVNISSMFELQLTNELYFTCHQLVDS, AISWYGVACYYHLIQNSDQTQRFFTKSTTL, GASWLGFGHFFASKGEHDQAMAAYRTSSR, LPLLCIGMELIRVHNLNLASQYILQAKDI, and PMIFNELGIIEYKNSQYNEAIKLFETALEICKIKS. The span at 403–434 shows a compositional bias: low complexity; sequence SNNNTFGANNNNNNNNNNNNNNNNNNNNNSNN. The segment at 403 to 436 is disordered; sequence SNNNTFGANNNNNNNNNNNNNNNNNNNNNSNNDI. The interval 738-767 is disordered; it reads GIGNNNNNNNNRRTTTTTTTTSNNQKKNSS. 2 TPR repeats span residues 777–809 and 814–843; these read ESWEPTIYNLAHCYRKLRKFELALHYYTMSLSL and PSTYSALGFTHHLQGNFDEAIDYYHQSLSI.

It belongs to the APC6/CDC16 family. The APC/C is composed of at least 13 subunits that stay tightly associated throughout the cell cycle: anapc1, anapc2, anapc3, anapc4, anapc5, anapc6, anapc7, anapc8, anapc10, anapc11, cdc20, cdc26 and cdh1.

It is found in the nucleus. Its pathway is protein modification; protein ubiquitination. Component of the anaphase promoting complex/cyclosome (APC/C), a cell cycle-regulated E3 ubiquitin-protein ligase complex that controls progression through mitosis and the G1 phase of the cell cycle. This Dictyostelium discoideum (Social amoeba) protein is Anaphase-promoting complex subunit 6 (anapc6).